We begin with the raw amino-acid sequence, 407 residues long: 1-deoxy-D-xylulose 5-phosphate reductoisomerase (407 aa).

NADPH-binding residues include threonine 25, glycine 26, serine 27, isoleucine 28, asparagine 53, and asparagine 136. Lysine 137 contacts 1-deoxy-D-xylulose 5-phosphate. Glutamate 138 lines the NADPH pocket. Aspartate 162 contributes to the Mn(2+) binding site. Residues serine 163, glutamate 164, serine 188, and histidine 211 each contribute to the 1-deoxy-D-xylulose 5-phosphate site. Glutamate 164 is a Mn(2+) binding site. Glycine 217 serves as a coordination point for NADPH. Positions 224, 229, 230, and 233 each coordinate 1-deoxy-D-xylulose 5-phosphate. Glutamate 233 is a binding site for Mn(2+).

Belongs to the DXR family. Mg(2+) serves as cofactor. It depends on Mn(2+) as a cofactor.

It carries out the reaction 2-C-methyl-D-erythritol 4-phosphate + NADP(+) = 1-deoxy-D-xylulose 5-phosphate + NADPH + H(+). Its pathway is isoprenoid biosynthesis; isopentenyl diphosphate biosynthesis via DXP pathway; isopentenyl diphosphate from 1-deoxy-D-xylulose 5-phosphate: step 1/6. Functionally, catalyzes the NADPH-dependent rearrangement and reduction of 1-deoxy-D-xylulose-5-phosphate (DXP) to 2-C-methyl-D-erythritol 4-phosphate (MEP). The chain is 1-deoxy-D-xylulose 5-phosphate reductoisomerase from Bradyrhizobium diazoefficiens (strain JCM 10833 / BCRC 13528 / IAM 13628 / NBRC 14792 / USDA 110).